A 111-amino-acid polypeptide reads, in one-letter code: Ig kappa chain V-III region PC 7940 (111 aa).

Residues Asp-1–Cys-23 form a framework-1 region. A disulfide bridge links Cys-23 with Cys-92. The tract at residues Arg-24 to His-38 is complementarity-determining-1. The framework-2 stretch occupies residues Trp-39–Tyr-53. Positions Leu-54–Ser-60 are complementarity-determining-2. Residues Gly-61–Cys-92 form a framework-3 region. The interval Gln-93–Thr-101 is complementarity-determining-3. The interval Phe-102–Lys-111 is framework-4.

This chain is Ig kappa chain V-III region PC 7940, found in Mus musculus (Mouse).